Here is a 113-residue protein sequence, read N- to C-terminus: Bactofilin BacN (113 aa).

This sequence belongs to the bactofilin family. As to quaternary structure, interacts with BacO and BacP, the 3 proteins colocalize as an extended structure.

It localises to the cytoplasm. The protein localises to the cytoskeleton. A non-essential component of the chromosome segregation machinery. Positions the ParA-ParB-parS chromosome segregation machinery within the cell; BacP seems to be the most important bactofilin in this process. Forms a heteropolymeric, subpolar scaffold in the cell; BacP probably forms the core, BacO contributes to position and integrity while BacN does not seem to contribute to assembly. The polypeptide is Bactofilin BacN (Myxococcus xanthus (strain DK1622)).